The chain runs to 1649 residues: DNA-directed RNA polymerase subunit beta' (1649 aa).

4 residues coordinate Zn(2+): cysteine 62, cysteine 64, cysteine 77, and cysteine 80. 3 residues coordinate Mg(2+): aspartate 746, aspartate 748, and aspartate 750. Residues cysteine 1077, cysteine 1268, cysteine 1275, and cysteine 1278 each coordinate Zn(2+).

Belongs to the RNA polymerase beta' chain family. The RNAP catalytic core consists of 2 alpha, 1 beta, 1 beta' and 1 omega subunit. When a sigma factor is associated with the core the holoenzyme is formed, which can initiate transcription. It depends on Mg(2+) as a cofactor. Zn(2+) serves as cofactor.

The catalysed reaction is RNA(n) + a ribonucleoside 5'-triphosphate = RNA(n+1) + diphosphate. Functionally, DNA-dependent RNA polymerase catalyzes the transcription of DNA into RNA using the four ribonucleoside triphosphates as substrates. This chain is DNA-directed RNA polymerase subunit beta', found in Thermosipho africanus (strain TCF52B).